Consider the following 331-residue polypeptide: MHFIDEVKIYIKGGNGGNGCISFHREKFIDRGGPDGGDGGFGGSVIFRSNHHINTLVNYRYQQHFTAENGENGKGSNRSGKSGKSLILDVPVGTQIFSQDGDILLYDFTEDEKSFEIIKGGCGGLGNSHFKTSVNQAPRKSTEGEIAEEMWIHLRLKLLSDVGLIGLPNAGKSTFLSVVTAAKPKIADYPFTTLVPNLGVVYIDDEEFVIADIPGLIAGAHQGYGLGDKFLKHIERCNVLIHLIDGASNNVIADYNTVRFELESYSDYLKNKIEIICLNKCDVLVDEEIQKKIKKLQKVTNKVVHPISTYNNQGVNKIVKLALEIIKNQKY.

Residues 1–159 (MHFIDEVKIY…MWIHLRLKLL (159 aa)) enclose the Obg domain. The OBG-type G domain maps to 160–327 (SDVGLIGLPN…IVKLALEIIK (168 aa)). Residues 166–173 (GLPNAGKS), 191–195 (FTTLV), 212–215 (DIPG), 279–282 (NKCD), and 308–310 (STY) contribute to the GTP site. The Mg(2+) site is built by Ser173 and Thr193.

The protein belongs to the TRAFAC class OBG-HflX-like GTPase superfamily. OBG GTPase family. As to quaternary structure, monomer. Mg(2+) is required as a cofactor.

The protein localises to the cytoplasm. An essential GTPase which binds GTP, GDP and possibly (p)ppGpp with moderate affinity, with high nucleotide exchange rates and a fairly low GTP hydrolysis rate. Plays a role in control of the cell cycle, stress response, ribosome biogenesis and in those bacteria that undergo differentiation, in morphogenesis control. This is GTPase Obg from Rickettsia prowazekii (strain Madrid E).